Reading from the N-terminus, the 168-residue chain is UPF0303 protein YE1367 (168 aa).

This sequence belongs to the UPF0303 family.

The sequence is that of UPF0303 protein YE1367 from Yersinia enterocolitica serotype O:8 / biotype 1B (strain NCTC 13174 / 8081).